A 449-amino-acid polypeptide reads, in one-letter code: Phosphomethylpyrimidine synthase (449 aa).

Substrate contacts are provided by residues N80, M109, Y138, H173, 193–195 (SRG), 234–237 (DSLR), and E273. A Zn(2+)-binding site is contributed by H277. Substrate is bound at residue Y300. H341 contacts Zn(2+). Residues C421, C424, and C429 each contribute to the [4Fe-4S] cluster site.

This sequence belongs to the ThiC family. Homodimer. Requires [4Fe-4S] cluster as cofactor.

It carries out the reaction 5-amino-1-(5-phospho-beta-D-ribosyl)imidazole + S-adenosyl-L-methionine = 4-amino-2-methyl-5-(phosphooxymethyl)pyrimidine + CO + 5'-deoxyadenosine + formate + L-methionine + 3 H(+). The protein operates within cofactor biosynthesis; thiamine diphosphate biosynthesis. Functionally, catalyzes the synthesis of the hydroxymethylpyrimidine phosphate (HMP-P) moiety of thiamine from aminoimidazole ribotide (AIR) in a radical S-adenosyl-L-methionine (SAM)-dependent reaction. In Campylobacter hominis (strain ATCC BAA-381 / DSM 21671 / CCUG 45161 / LMG 19568 / NCTC 13146 / CH001A), this protein is Phosphomethylpyrimidine synthase.